The following is a 265-amino-acid chain: Basic leucine zipper 6 (265 aa).

2 disordered regions span residues 1–24 (MAQL…SAGG) and 77–139 (LMSM…RDPK). A compositionally biased stretch (low complexity) spans 85-97 (GGSSAPGSDNGGS). A compositionally biased stretch (polar residues) spans 122-132 (TQEQAAATSPT). The region spanning 137 to 189 (DPKRVKRILANRQSAQRSRVRKLQYISELERSVTTLQNEVSVLSPRVAFLDQQ) is the bZIP domain. Residues 139–158 (KRVKRILANRQSAQRSRVRK) are basic motif. Residues 165–186 (LERSVTTLQNEVSVLSPRVAFL) form a leucine-zipper region. Residues 239-265 (LSGGLAADHAHVHGGPPPVRAEKELMS) are disordered.

Expressed in roots, shoots and panicles.

It is found in the nucleus. In terms of biological role, transcription regulator. The sequence is that of Basic leucine zipper 6 (BZIP06) from Oryza sativa subsp. japonica (Rice).